Consider the following 72-residue polypeptide: Small ribosomal subunit protein bS18 (72 aa).

Belongs to the bacterial ribosomal protein bS18 family. As to quaternary structure, part of the 30S ribosomal subunit. Forms a tight heterodimer with protein bS6.

In terms of biological role, binds as a heterodimer with protein bS6 to the central domain of the 16S rRNA, where it helps stabilize the platform of the 30S subunit. This chain is Small ribosomal subunit protein bS18, found in Francisella philomiragia subsp. philomiragia (strain ATCC 25017 / CCUG 19701 / FSC 153 / O#319-036).